The chain runs to 483 residues: tRNA sulfurtransferase (483 aa).

The THUMP domain maps to 61–165 (AEVLEILTTT…DELLNQVIAR (105 aa)). Residues 183 to 184 (LI), lysine 265, glycine 287, and glutamine 296 each bind ATP. Cysteines 344 and 457 form a disulfide. In terms of domain architecture, Rhodanese spans 405 to 483 (EEGNAVVLDI…GFNNVKVYRP (79 aa)). Cysteine 457 serves as the catalytic Cysteine persulfide intermediate.

It belongs to the ThiI family.

The protein resides in the cytoplasm. The enzyme catalyses [ThiI sulfur-carrier protein]-S-sulfanyl-L-cysteine + a uridine in tRNA + 2 reduced [2Fe-2S]-[ferredoxin] + ATP + H(+) = [ThiI sulfur-carrier protein]-L-cysteine + a 4-thiouridine in tRNA + 2 oxidized [2Fe-2S]-[ferredoxin] + AMP + diphosphate. It catalyses the reaction [ThiS sulfur-carrier protein]-C-terminal Gly-Gly-AMP + S-sulfanyl-L-cysteinyl-[cysteine desulfurase] + AH2 = [ThiS sulfur-carrier protein]-C-terminal-Gly-aminoethanethioate + L-cysteinyl-[cysteine desulfurase] + A + AMP + 2 H(+). Its pathway is cofactor biosynthesis; thiamine diphosphate biosynthesis. Catalyzes the ATP-dependent transfer of a sulfur to tRNA to produce 4-thiouridine in position 8 of tRNAs, which functions as a near-UV photosensor. Also catalyzes the transfer of sulfur to the sulfur carrier protein ThiS, forming ThiS-thiocarboxylate. This is a step in the synthesis of thiazole, in the thiamine biosynthesis pathway. The sulfur is donated as persulfide by IscS. The protein is tRNA sulfurtransferase of Vibrio cholerae serotype O1 (strain ATCC 39315 / El Tor Inaba N16961).